Consider the following 304-residue polypeptide: Eukaryotic translation initiation factor 2 subunit alpha (304 aa).

Residues 17 to 88 (DDIVMVNVQQ…EKGYIDLSKR (72 aa)) form the S1 motif domain. Residue S52 is modified to Phosphoserine; by GCN2. The disordered stretch occupies residues 283 to 304 (LESKELDNRSDSEDDEDESDDE). Residues 284–293 (ESKELDNRSD) show a composition bias toward basic and acidic residues. Phosphoserine occurs at positions 292 and 294. The span at 294 to 304 (SEDDEDESDDE) shows a compositional bias: acidic residues.

The protein belongs to the eIF-2-alpha family. Eukaryotic translation initiation factor 2 eIF2 is a heterotrimeric complex composed of an alpha, a beta and a gamma subunit. The factors eIF-1, eIF-2, eIF-3, TIF5/eIF-5 and methionyl-tRNAi form a multifactor complex (MFC) that may bind to the 40S ribosome. Interacts with CDC123; the interaction is direct. Interacts with GCD1. In terms of processing, phosphorylated; phosphorylation on Ser-52 by the GCN2 protein kinase occurs in response to low amino acid, carbon, or purine availability. Phosphorylation inhibits the guanine nucleotide exchange factor activity of the eIF2B complex.

The protein resides in the cytoplasm. It localises to the cytosol. Its function is as follows. eIF-2 functions in the early steps of protein synthesis by forming a ternary complex with GTP and initiator tRNA. This complex binds to a 40S ribosomal subunit, followed by mRNA binding to form a 43S pre-initiation complex. Junction of the 60S ribosomal subunit to form the 80S initiation complex is preceded by hydrolysis of the GTP bound to eIF-2 and release of an eIF-2-GDP binary complex. In order for eIF-2 to recycle and catalyze another round of initiation, the GDP bound to eIF-2 must exchange with GTP by way of a reaction catalyzed by eIF2B. This is Eukaryotic translation initiation factor 2 subunit alpha from Saccharomyces cerevisiae (strain ATCC 204508 / S288c) (Baker's yeast).